The primary structure comprises 262 residues: Flap endonuclease Xni (262 aa).

Residue aspartate 105 coordinates Mg(2+). The region spanning 162 to 257 (ERSQFLDLMA…FRVIDSPPEK (96 aa)) is the 5'-3' exonuclease domain. Residues leucine 172, alanine 173, proline 181, isoleucine 183, and isoleucine 186 each coordinate K(+). Positions 185–190 (GIGPKS) are interaction with DNA.

It belongs to the Xni family. Requires Mg(2+) as cofactor. The cofactor is K(+).

Its function is as follows. Has flap endonuclease activity. During DNA replication, flap endonucleases cleave the 5'-overhanging flap structure that is generated by displacement synthesis when DNA polymerase encounters the 5'-end of a downstream Okazaki fragment. This Shewanella baltica (strain OS155 / ATCC BAA-1091) protein is Flap endonuclease Xni.